Consider the following 406-residue polypeptide: Cysteine desulfurase (406 aa).

The residue at position 226 (lysine 226) is an N6-(pyridoxal phosphate)lysine. Catalysis depends on cysteine 364, which acts as the Cysteine persulfide intermediate.

The protein belongs to the class-V pyridoxal-phosphate-dependent aminotransferase family. Csd subfamily. In terms of assembly, homodimer. Interacts with SufE and the SufBCD complex composed of SufB, SufC and SufD. The interaction with SufE is required to mediate the direct transfer of the sulfur atom from the S-sulfanylcysteine. The cofactor is pyridoxal 5'-phosphate.

Its subcellular location is the cytoplasm. It carries out the reaction (sulfur carrier)-H + L-cysteine = (sulfur carrier)-SH + L-alanine. It catalyses the reaction L-selenocysteine + AH2 = hydrogenselenide + L-alanine + A + H(+). Its pathway is cofactor biosynthesis; iron-sulfur cluster biosynthesis. Its function is as follows. Cysteine desulfurases mobilize the sulfur from L-cysteine to yield L-alanine, an essential step in sulfur metabolism for biosynthesis of a variety of sulfur-containing biomolecules. Component of the suf operon, which is activated and required under specific conditions such as oxidative stress and iron limitation. Acts as a potent selenocysteine lyase in vitro, that mobilizes selenium from L-selenocysteine. Selenocysteine lyase activity is however unsure in vivo. This chain is Cysteine desulfurase, found in Salmonella gallinarum (strain 287/91 / NCTC 13346).